We begin with the raw amino-acid sequence, 435 residues long: Zinc finger and BTB domain-containing protein 25 (435 aa).

In terms of domain architecture, BTB spans 1 to 107 (MDTASHSLVL…GIRFLHADYL (107 aa)). Glycyl lysine isopeptide (Lys-Gly) (interchain with G-Cter in SUMO2) cross-links involve residues Lys-142, Lys-148, Lys-198, and Lys-204. The C2H2-type 1 zinc-finger motif lies at 238 to 260 (HLCHYCGERFDSRSNLRQHLHTH). Residues Lys-303 and Lys-330 each participate in a glycyl lysine isopeptide (Lys-Gly) (interchain with G-Cter in SUMO2) cross-link. The C2H2-type 2 zinc finger occupies 349-371 (MSCTICGHKFPRKSQLLEHMYTH). Residue Lys-405 forms a Glycyl lysine isopeptide (Lys-Gly) (interchain with G-Cter in SUMO2) linkage.

Expressed mainly in hematopoietic cells and testis.

It localises to the nucleus. Its function is as follows. May be involved in transcriptional regulation. The chain is Zinc finger and BTB domain-containing protein 25 (ZBTB25) from Homo sapiens (Human).